The chain runs to 123 residues: Small ribosomal subunit protein uS12 (123 aa).

Asp-89 bears the 3-methylthioaspartic acid mark.

The protein belongs to the universal ribosomal protein uS12 family. Part of the 30S ribosomal subunit. Contacts proteins S8 and S17. May interact with IF1 in the 30S initiation complex.

Its function is as follows. With S4 and S5 plays an important role in translational accuracy. Functionally, interacts with and stabilizes bases of the 16S rRNA that are involved in tRNA selection in the A site and with the mRNA backbone. Located at the interface of the 30S and 50S subunits, it traverses the body of the 30S subunit contacting proteins on the other side and probably holding the rRNA structure together. The combined cluster of proteins S8, S12 and S17 appears to hold together the shoulder and platform of the 30S subunit. The sequence is that of Small ribosomal subunit protein uS12 from Nitrobacter winogradskyi (strain ATCC 25391 / DSM 10237 / CIP 104748 / NCIMB 11846 / Nb-255).